The primary structure comprises 124 residues: Small ribosomal subunit protein uS12cz/uS12cy (124 aa).

It belongs to the universal ribosomal protein uS12 family. In terms of assembly, part of the 30S ribosomal subunit.

It is found in the plastid. The protein localises to the chloroplast. With S4 and S5 plays an important role in translational accuracy. Located at the interface of the 30S and 50S subunits. The protein is Small ribosomal subunit protein uS12cz/uS12cy (rps12-A) of Agrostis stolonifera (Creeping bentgrass).